A 978-amino-acid chain; its full sequence is Regulator of telomere elongation helicase 1 homolog (978 aa).

The Helicase ATP-binding domain occupies 7-318; that stretch reads NGIPVNFPFE…EDDDAKKDFT (312 aa). An ATP-binding site is contributed by 42–49; sequence SPTGTGKT. [4Fe-4S] cluster contacts are provided by Cys159, Cys177, Cys186, and Cys222. A DEAH box motif is present at residues 265-268; sequence DEAH.

The protein belongs to the helicase family. RAD3/XPD subfamily.

It localises to the nucleus. It carries out the reaction ATP + H2O = ADP + phosphate + H(+). A probable ATP-dependent DNA helicase implicated in DNA repair and the maintenance of genomic stability. Acts as an anti-recombinase to counteract toxic recombination and limit crossover during meiosis. Regulates meiotic recombination and crossover homeostasis by physically dissociating strand invasion events and thereby promotes noncrossover repair by meiotic synthesis dependent strand annealing (SDSA) as well as disassembly of D loop recombination intermediates. In Culex quinquefasciatus (Southern house mosquito), this protein is Regulator of telomere elongation helicase 1 homolog.